A 202-amino-acid polypeptide reads, in one-letter code: ATP-dependent dethiobiotin synthetase BioD (202 aa).

Residue 12–17 coordinates ATP; that stretch reads GIGKTI. Threonine 16 contributes to the Mg(2+) binding site. Lysine 32 is a catalytic residue. Serine 36 provides a ligand contact to substrate. ATP contacts are provided by residues aspartate 43, 94–97, and 178–180; these read EGAG and PVV. Mg(2+) contacts are provided by aspartate 43 and glutamate 94.

It belongs to the dethiobiotin synthetase family. As to quaternary structure, homodimer. Requires Mg(2+) as cofactor.

It is found in the cytoplasm. The catalysed reaction is (7R,8S)-7,8-diammoniononanoate + CO2 + ATP = (4R,5S)-dethiobiotin + ADP + phosphate + 3 H(+). Its pathway is cofactor biosynthesis; biotin biosynthesis; biotin from 7,8-diaminononanoate: step 1/2. Functionally, catalyzes a mechanistically unusual reaction, the ATP-dependent insertion of CO2 between the N7 and N8 nitrogen atoms of 7,8-diaminopelargonic acid (DAPA, also called 7,8-diammoniononanoate) to form a ureido ring. This chain is ATP-dependent dethiobiotin synthetase BioD, found in Sphingopyxis alaskensis (strain DSM 13593 / LMG 18877 / RB2256) (Sphingomonas alaskensis).